Here is a 468-residue protein sequence, read N- to C-terminus: Glutamate--tRNA ligase (468 aa).

The 'HIGH' region motif lies at 12–22 (PSPTGFIHLGN). A 'KMSKS' region motif is present at residues 244-248 (KMSKR). Lys-247 lines the ATP pocket.

Belongs to the class-I aminoacyl-tRNA synthetase family. Glutamate--tRNA ligase type 1 subfamily. As to quaternary structure, monomer.

It localises to the cytoplasm. It carries out the reaction tRNA(Glu) + L-glutamate + ATP = L-glutamyl-tRNA(Glu) + AMP + diphosphate. Functionally, catalyzes the attachment of glutamate to tRNA(Glu) in a two-step reaction: glutamate is first activated by ATP to form Glu-AMP and then transferred to the acceptor end of tRNA(Glu). In Polynucleobacter necessarius subsp. necessarius (strain STIR1), this protein is Glutamate--tRNA ligase.